The chain runs to 926 residues: Staphylococcal nuclease domain-containing protein 1 (926 aa).

Low complexity predominate over residues 1–17 (MATAANTATAAGAAKDA). The disordered stretch occupies residues 1 to 24 (MATAANTATAAGAAKDAPPAPTKS). 4 consecutive TNase-like domains span residues 23 to 167 (KSLS…KWSP), 195 to 333 (NPVK…QWQD), 346 to 505 (KDFS…LHAK), and 535 to 674 (LRTE…IWTN). Residues 749–807 (TPKRGDLVAAQFTLDNQWYRAKVERVQGSNATVLYIDYGNKETLPTNRLAALPPAFSSE) form the Tudor domain. The segment at 760 to 788 (FTLDNQWYRAKVERVQGSNATVLYIDYGN) is involved in dimethylarginine binding.

Associates with the RNA-induced silencing complex (RISC). Interacts with the RISC components AGO2, Fmr1 and vig. Interacts with piwi. In terms of tissue distribution, expressed in adult ovaries and testis (at protein level).

The protein localises to the cytoplasm. It is found in the nucleus. The enzyme catalyses Endonucleolytic cleavage to nucleoside 3'-phosphates and 3'-phosphooligonucleotide end-products.. Its function is as follows. Endonuclease which shows activity towards both DNA and RNA substrates. Has a role in translation regulation throught its association with the with the RNA-induced silencing complex (RISC). Plays a role in spermatogenesis probably by negatively regulating piwi expression in the germline. Together with piwi, might be involved in transposon repression in the germline. The protein is Staphylococcal nuclease domain-containing protein 1 of Drosophila melanogaster (Fruit fly).